The primary structure comprises 194 residues: Cation channel sperm-associated auxiliary subunit zeta (194 aa).

Component of the CatSper complex or CatSpermasome composed of the core pore-forming members CATSPER1, CATSPER2, CATSPER3 and CATSPER4 as well as auxiliary members CATSPERB, CATSPERG2, CATSPERD, CATSPERE, CATSPERZ, C2CD6/CATSPERT, SLCO6C1, TMEM249, TMEM262 and EFCAB9. HSPA1 may be an additional auxiliary complex member. The core complex members CATSPER1, CATSPER2, CATSPER3 and CATSPER4 form a heterotetrameric channel. The auxiliary CATSPERB, CATSPERG2, CATSPERD and CATSPERE subunits form a pavilion-like structure over the pore which stabilizes the complex through interactions with CATSPER4, CATSPER3, CATSPER1 and CATSPER2 respectively. SLCO6C1 interacts with CATSPERE and TMEM262/CATSPERH interacts with CATSPERB, further stabilizing the complex. C2CD6/CATSPERT interacts at least with CATSPERD and is required for targeting the CatSper complex in the flagellar membrane. Interacts with EFCAB9; the interaction is direct, Ca(2+)-dependent and connects EFCAB9 with the CatSper complex. Dissociates from EFCAB9 at elevated pH. Testis-specific. Expressed in adult but not in fetal testis. Not expressed in ovary. Within testis, expression is restricted to spermatids.

Its subcellular location is the cell projection. The protein localises to the cilium. It localises to the flagellum membrane. Auxiliary component of the CatSper complex, a complex involved in sperm cell hyperactivation. Sperm cell hyperactivation is needed for sperm motility which is essential late in the preparation of sperm for fertilization. Required for a distribution of the CatSper complex in linear quadrilateral nanodomains along the flagellum, maximizing fertilization inside the mammalian female reproductive tract. Together with EFCAB9, associates with the CatSper channel pore and is required for the two-row structure of each single CatSper channel. This Mus musculus (Mouse) protein is Cation channel sperm-associated auxiliary subunit zeta.